The chain runs to 451 residues: Clusterin (451 aa).

An N-terminal signal peptide occupies residues 1–18; that stretch reads MELPLLALLSLGLVCQGG. Disulfide bonds link Cys98-Cys314, Cys109-Cys306, Cys112-Cys303, Cys117-Cys296, and Cys125-Cys286. 6 N-linked (GlcNAc...) asparagine glycosylation sites follow: Asn99, Asn141, Asn278, Asn355, Asn375, and Asn447.

This sequence belongs to the clusterin family. As to quaternary structure, antiparallel disulfide-linked heterodimer of an alpha chain and a beta chain. Self-associates and forms higher oligomers. Interacts with a broad range of misfolded proteins. In terms of processing, proteolytically cleaved on its way through the secretory system, probably within the Golgi lumen. Polyubiquitinated, leading to proteasomal degradation.

Its subcellular location is the secreted. The protein localises to the cytoplasmic vesicle. The protein resides in the secretory vesicle. It localises to the chromaffin granule. It is found in the nucleus. Its subcellular location is the cytoplasm. The protein localises to the mitochondrion membrane. The protein resides in the cytosol. It localises to the endoplasmic reticulum. Functions as extracellular chaperone that prevents aggregation of nonnative proteins. Prevents stress-induced aggregation of blood plasma proteins. Does not require ATP. Maintains partially unfolded proteins in a state appropriate for subsequent refolding by other chaperones, such as HSPA8/HSC70. Does not refold proteins by itself. Binding to cell surface receptors triggers internalization of the chaperone-client complex and subsequent lysosomal or proteasomal degradation. When secreted, protects cells against apoptosis and against cytolysis by complement: inhibits assembly of the complement membrane attack complex (MAC) by preventing polymerization of C9 pore component of the MAC complex. Intracellular forms interact with ubiquitin and SCF (SKP1-CUL1-F-box protein) E3 ubiquitin-protein ligase complexes and promote the ubiquitination and subsequent proteasomal degradation of target proteins. Modulates NF-kappa-B transcriptional activity. Promotes apoptosis when in the nucleus. Inhibits apoptosis when associated with the mitochondrial membrane by interference with BAX-dependent release of cytochrome c into the cytoplasm. Plays a role in the regulation of cell proliferation. This is Clusterin (CLU) from Coturnix japonica (Japanese quail).